The chain runs to 479 residues: Aspartyl/glutamyl-tRNA(Asn/Gln) amidotransferase subunit B (479 aa).

Belongs to the GatB/GatE family. GatB subfamily. In terms of assembly, heterotrimer of A, B and C subunits.

It catalyses the reaction L-glutamyl-tRNA(Gln) + L-glutamine + ATP + H2O = L-glutaminyl-tRNA(Gln) + L-glutamate + ADP + phosphate + H(+). The catalysed reaction is L-aspartyl-tRNA(Asn) + L-glutamine + ATP + H2O = L-asparaginyl-tRNA(Asn) + L-glutamate + ADP + phosphate + 2 H(+). Its function is as follows. Allows the formation of correctly charged Asn-tRNA(Asn) or Gln-tRNA(Gln) through the transamidation of misacylated Asp-tRNA(Asn) or Glu-tRNA(Gln) in organisms which lack either or both of asparaginyl-tRNA or glutaminyl-tRNA synthetases. The reaction takes place in the presence of glutamine and ATP through an activated phospho-Asp-tRNA(Asn) or phospho-Glu-tRNA(Gln). This chain is Aspartyl/glutamyl-tRNA(Asn/Gln) amidotransferase subunit B, found in Geobacter sp. (strain M21).